The following is a 107-amino-acid chain: Sperm-specific class P protein 34 (107 aa).

The disordered stretch occupies residues 1–26 (MINVDPPTGNYPATGGNSTHNITSES). An MSP domain is found at 1–107 (MINVDPPTGN…GEIIVKLIAA (107 aa)). Over residues 15–25 (GGNSTHNITSE) the composition is skewed to polar residues.

In terms of tissue distribution, expressed at higher level in testis.

This is Sperm-specific class P protein 34 (ssp-34) from Caenorhabditis elegans.